A 593-amino-acid chain; its full sequence is A-type ATP synthase subunit A (593 aa).

Residue 236-243 (GPFGSGKT) coordinates ATP.

The protein belongs to the ATPase alpha/beta chains family. Has multiple subunits with at least A(3), B(3), C, D, E, F, H, I and proteolipid K(x).

It localises to the cell membrane. The catalysed reaction is ATP + H2O + 4 H(+)(in) = ADP + phosphate + 5 H(+)(out). Its function is as follows. Component of the A-type ATP synthase that produces ATP from ADP in the presence of a proton gradient across the membrane. The A chain is the catalytic subunit. In Pyrobaculum islandicum (strain DSM 4184 / JCM 9189 / GEO3), this protein is A-type ATP synthase subunit A.